We begin with the raw amino-acid sequence, 294 residues long: Nucleotide-binding protein CLB_3433 (294 aa).

8-15 (GLSGAGKT) is a binding site for ATP. 59–62 (DIRG) contacts GTP.

The protein belongs to the RapZ-like family.

In terms of biological role, displays ATPase and GTPase activities. The chain is Nucleotide-binding protein CLB_3433 from Clostridium botulinum (strain ATCC 19397 / Type A).